A 376-amino-acid polypeptide reads, in one-letter code: Chaperone protein DnaJ (376 aa).

Positions 5–70 constitute a J domain; sequence DYYEVLGLSK…QKKANYDQFG (66 aa). The CR-type zinc finger occupies 133 to 215; it reads GVEKEISITR…CHGKGTVRKN (83 aa). Zn(2+) is bound by residues Cys146, Cys149, Cys163, Cys166, Cys189, Cys192, Cys203, and Cys206. CXXCXGXG motif repeat units lie at residues 146 to 153, 163 to 170, 189 to 196, and 203 to 210; these read CDTCAGSG, CDKCGGTG, CDKCGGSG, and CTTCHGKG.

Belongs to the DnaJ family. As to quaternary structure, homodimer. It depends on Zn(2+) as a cofactor.

The protein resides in the cytoplasm. Its function is as follows. Participates actively in the response to hyperosmotic and heat shock by preventing the aggregation of stress-denatured proteins and by disaggregating proteins, also in an autonomous, DnaK-independent fashion. Unfolded proteins bind initially to DnaJ; upon interaction with the DnaJ-bound protein, DnaK hydrolyzes its bound ATP, resulting in the formation of a stable complex. GrpE releases ADP from DnaK; ATP binding to DnaK triggers the release of the substrate protein, thus completing the reaction cycle. Several rounds of ATP-dependent interactions between DnaJ, DnaK and GrpE are required for fully efficient folding. Also involved, together with DnaK and GrpE, in the DNA replication of plasmids through activation of initiation proteins. The sequence is that of Chaperone protein DnaJ from Clostridium novyi (strain NT).